We begin with the raw amino-acid sequence, 385 residues long: Tyrosine--tRNA ligase 1, cytoplasmic (385 aa).

A 'HIGH' region motif is present at residues 77–85 (PSGRMHIAQ). L-tyrosine is bound by residues Y200, Q204, D207, and Q222. A 'KMSKS' region motif is present at residues 259 to 263 (KMSKS). Residue K262 coordinates ATP.

This sequence belongs to the class-I aminoacyl-tRNA synthetase family.

The protein localises to the cytoplasm. It is found in the cytosol. It carries out the reaction tRNA(Tyr) + L-tyrosine + ATP = L-tyrosyl-tRNA(Tyr) + AMP + diphosphate + H(+). Its function is as follows. Catalyzes the attachment of tyrosine to tRNA(Tyr) in a two-step reaction: tyrosine is first activated by ATP to form Tyr-AMP and then transferred to the acceptor end of tRNA(Tyr). In Arabidopsis thaliana (Mouse-ear cress), this protein is Tyrosine--tRNA ligase 1, cytoplasmic.